The sequence spans 217 residues: Adenylate kinase (217 aa).

Residue 10–15 (GSGKGT) participates in ATP binding. The interval 30–59 (STGDLLRAAVAAGSELGKQAKAAMDAGELV) is NMP. Residues T31, R36, 57-59 (ELV), 85-88 (GFPR), and Q92 contribute to the AMP site. The LID stretch occupies residues 126–164 (GRRTCQACGAIYNIYFSPPEVDHRCDKCNSDQLVQRSDD). R127 is a binding site for ATP. The Zn(2+) site is built by C130 and C133. 136 to 137 (IY) is an ATP binding site. Residues C150 and C153 each contribute to the Zn(2+) site. Residues R161 and R172 each coordinate AMP. An ATP-binding site is contributed by D200.

The protein belongs to the adenylate kinase family. As to quaternary structure, monomer.

The protein resides in the cytoplasm. The catalysed reaction is AMP + ATP = 2 ADP. Its pathway is purine metabolism; AMP biosynthesis via salvage pathway; AMP from ADP: step 1/1. Its function is as follows. Catalyzes the reversible transfer of the terminal phosphate group between ATP and AMP. Plays an important role in cellular energy homeostasis and in adenine nucleotide metabolism. This Nitrosococcus oceani (strain ATCC 19707 / BCRC 17464 / JCM 30415 / NCIMB 11848 / C-107) protein is Adenylate kinase.